Consider the following 430-residue polypeptide: Tektin-2 (430 aa).

Coiled coils occupy residues 81-162 and 265-379; these read CLTD…FEKL and FRKR…DIAC.

The protein belongs to the tektin family. As to quaternary structure, microtubule inner protein component of sperm flagellar doublet microtubules. May interact with CCDC172. In terms of processing, tyrosine phosphorylated. Post-translationally, ubiquitinated, leading to its degradation. Deubiquitinated by USP16, promoting its stability. Expressed in trachea multiciliated cells.

The protein localises to the cytoplasm. It is found in the cytoskeleton. The protein resides in the cilium axoneme. It localises to the flagellum axoneme. Its subcellular location is the microtubule organizing center. In terms of biological role, microtubule inner protein (MIP) part of the dynein-decorated doublet microtubules (DMTs) in cilia and flagellar axoneme. Plays a key role in the assembly or attachment of the inner dynein arm to microtubules in sperm flagella and tracheal cilia. Forms filamentous polymers in the walls of ciliary and flagellar microtubules. The protein is Tektin-2 (TEKT2) of Bos taurus (Bovine).